The following is a 379-amino-acid chain: MPLINLPAFAGDLLADFERLKTLRVDTPVIQPAEPFLDMAGEDLRRRIFMTQSETGDSLCLRPEFTIPVCLRHIETATGTPQRYAYLGEVFRQRREGSSEFYQAGIEDLGDTDTAGADARAIGDAMRVLSNRLANRRLKVTLGDQSVFEAVIAACGLPGGWQKRLIHAFGDPKQLQKLLGELADPKSPGVFGHEVERLAILGILDDEERLVAHLAETMEATGYSTNASRSPRDIARRLKEKMELATTRLDRAALAVMREFLAFDLPLSEAPAALHAFAKKSRLKIDDALSLFDARVAAIAKVGAESDLIRYRAAFGRPLDYYTGLVFEIEAEGAPAVLAGGGRFDRLLTLLGAREHIPAVGFSLWLDRIERAIAAAGGA.

This sequence belongs to the class-II aminoacyl-tRNA synthetase family. HisZ subfamily. As to quaternary structure, heteromultimer composed of HisG and HisZ subunits.

The protein resides in the cytoplasm. It participates in amino-acid biosynthesis; L-histidine biosynthesis; L-histidine from 5-phospho-alpha-D-ribose 1-diphosphate: step 1/9. Required for the first step of histidine biosynthesis. May allow the feedback regulation of ATP phosphoribosyltransferase activity by histidine. The sequence is that of ATP phosphoribosyltransferase regulatory subunit from Sinorhizobium fredii (strain NBRC 101917 / NGR234).